The primary structure comprises 439 residues: Probable threonine protease PRSS50 (439 aa).

Disordered regions lie at residues 1 to 22 and 48 to 130; these read MEPW…VPGA and ERIR…TMAP. The first 47 residues, 1–47, serve as a signal peptide directing secretion; the sequence is MEPWCGAEVRGQGPQGPRVPGASRSRSRALLLLLLLLLLLLPRRPAG. The span at 9–21 shows a compositional bias: low complexity; the sequence is VRGQGPQGPRVPG. The Extracellular segment spans residues 48–415; sequence ERIRPRRPPR…WIWDRLSGEP (368 aa). A compositionally biased stretch (basic residues) spans 51-61; it reads RPRRPPRHAHP. The segment covering 112–127 has biased composition (low complexity); it reads QAQTNQTTTAPPNSQT. N-linked (GlcNAc...) asparagine glycosylation is found at asparagine 116 and asparagine 187. One can recognise a Peptidase S1 domain in the interval 157–412; sequence FCGSSHEPDP…YRPWIWDRLS (256 aa). Cysteine 192 and cysteine 208 are oxidised to a cystine. The Charge relay system role is filled by histidine 207. Asparagine 226 carries an N-linked (GlcNAc...) asparagine glycan. Catalysis depends on aspartate 260, which acts as the Charge relay system. 3 cysteine pairs are disulfide-bonded: cysteine 294/cysteine 370, cysteine 327/cysteine 350, and cysteine 360/cysteine 388. The active-site Charge relay system is threonine 364. A helical transmembrane segment spans residues 416 to 436; it reads LALPAPSRTLLLAFLLLLILL. At 437–439 the chain is on the cytoplasmic side; the sequence is GTL.

The protein belongs to the peptidase S1 family.

The protein localises to the membrane. Its function is as follows. May be involved in proteolysis through its threonine endopeptidase activity. This chain is Probable threonine protease PRSS50 (Prss50), found in Mus musculus (Mouse).